The chain runs to 259 residues: Phosphatidylglycerol--prolipoprotein diacylglyceryl transferase (259 aa).

4 helical membrane passes run 12–32, 46–66, 83–103, and 109–129; these read LSLHWYAVCILVGLLLAVYLA, IIDFILIAFPLAIIGARIYYV, IWNGGIAIYGGLITGTIVLFV, and VLNPIHFLDIAAPSVMLAQAI. Arginine 131 contributes to the a 1,2-diacyl-sn-glycero-3-phospho-(1'-sn-glycerol) binding site. Transmembrane regions (helical) follow at residues 167-187, 194-214, and 226-246; these read VPTFLYESMWNLIGFVIIMVW, LLDGDIISFYLIWYGCGRLVI, and GIRVSQYVSVLLIIIAIVFIF.

Belongs to the Lgt family.

It localises to the cell membrane. The enzyme catalyses L-cysteinyl-[prolipoprotein] + a 1,2-diacyl-sn-glycero-3-phospho-(1'-sn-glycerol) = an S-1,2-diacyl-sn-glyceryl-L-cysteinyl-[prolipoprotein] + sn-glycerol 1-phosphate + H(+). It participates in protein modification; lipoprotein biosynthesis (diacylglyceryl transfer). Its function is as follows. Catalyzes the transfer of the diacylglyceryl group from phosphatidylglycerol to the sulfhydryl group of the N-terminal cysteine of a prolipoprotein, the first step in the formation of mature lipoproteins. The protein is Phosphatidylglycerol--prolipoprotein diacylglyceryl transferase of Streptococcus equi subsp. zooepidemicus (strain H70).